The sequence spans 240 residues: Uridylate kinase (240 aa).

12 to 15 (KLSG) contacts ATP. An involved in allosteric activation by GTP region spans residues 20–25 (GSQGFG). G54 contributes to the UMP binding site. The ATP site is built by G55 and R59. UMP-binding positions include D74 and 135 to 142 (TGNPYFST). The ATP site is built by Y168 and D171.

It belongs to the UMP kinase family. In terms of assembly, homohexamer.

Its subcellular location is the cytoplasm. The enzyme catalyses UMP + ATP = UDP + ADP. The protein operates within pyrimidine metabolism; CTP biosynthesis via de novo pathway; UDP from UMP (UMPK route): step 1/1. With respect to regulation, allosterically activated by GTP. Inhibited by UTP. In terms of biological role, catalyzes the reversible phosphorylation of UMP to UDP. The polypeptide is Uridylate kinase (Desulfitobacterium hafniense (strain Y51)).